The following is a 410-amino-acid chain: Histidine--tRNA ligase (410 aa).

This sequence belongs to the class-II aminoacyl-tRNA synthetase family.

The protein localises to the cytoplasm. It catalyses the reaction tRNA(His) + L-histidine + ATP = L-histidyl-tRNA(His) + AMP + diphosphate + H(+). In Methanoculleus marisnigri (strain ATCC 35101 / DSM 1498 / JR1), this protein is Histidine--tRNA ligase.